Consider the following 2028-residue polypeptide: Pecanex-like protein 3 (2028 aa).

Helical transmembrane passes span Cys-33 to Leu-53 and Pro-54 to Ile-74. An N-linked (GlcNAc...) asparagine glycan is attached at Asn-95. The segment at Ser-96 to Pro-116 is disordered. Ser-127 carries the post-translational modification Phosphoserine. The residue at position 129 (Thr-129) is a Phosphothreonine. Disordered stretches follow at residues Ile-193 to Pro-239 and Leu-263 to Arg-625. The segment covering Gln-198–Ser-208 has biased composition (pro residues). Basic and acidic residues-rich tracts occupy residues Leu-263 to Cys-273 and Thr-305 to Asn-319. Asn-319 carries an N-linked (GlcNAc...) asparagine glycan. Thr-370 carries the post-translational modification Phosphothreonine. A phosphoserine mark is found at Ser-392 and Ser-431. The segment covering Gly-427–Arg-437 has biased composition (polar residues). The segment covering Thr-444–Gln-459 has biased composition (low complexity). The span at Thr-488–Ala-497 shows a compositional bias: polar residues. 2 positions are modified to phosphoserine: Ser-505 and Ser-521. The next 7 membrane-spanning stretches (helical) occupy residues Asn-793 to Phe-815, Ile-819 to Leu-836, Trp-852 to Leu-872, Pro-880 to Ala-900, Val-903 to Val-923, Ser-946 to Cys-968, and His-980 to Ser-1000. The residue at position 1025 (Ser-1025) is a Phosphoserine. 4 helical membrane passes run Leu-1053 to Ile-1073, Val-1078 to Leu-1098, Phe-1244 to Ala-1264, and Leu-1280 to Met-1300. Residue Ser-1697 is modified to Phosphoserine. The N-linked (GlcNAc...) asparagine glycan is linked to Asn-1770. The disordered stretch occupies residues Gly-1845 to Tyr-2028. The segment covering Arg-1890–Pro-1921 has biased composition (pro residues). Residues Ser-1909 and Ser-1955 each carry the phosphoserine modification. The span at Pro-1966–Ser-1977 shows a compositional bias: low complexity. The segment covering Glu-1978–Asp-1987 has biased composition (polar residues).

It belongs to the pecanex family.

Its subcellular location is the membrane. The sequence is that of Pecanex-like protein 3 from Mus musculus (Mouse).